We begin with the raw amino-acid sequence, 221 residues long: Endonuclease V (221 aa).

Mg(2+)-binding residues include D43 and D111.

Belongs to the endonuclease V family. Mg(2+) is required as a cofactor.

The protein resides in the cytoplasm. The catalysed reaction is Endonucleolytic cleavage at apurinic or apyrimidinic sites to products with a 5'-phosphate.. DNA repair enzyme involved in the repair of deaminated bases. Selectively cleaves double-stranded DNA at the second phosphodiester bond 3' to a deoxyinosine leaving behind the intact lesion on the nicked DNA. In Azotobacter vinelandii (strain DJ / ATCC BAA-1303), this protein is Endonuclease V.